The primary structure comprises 347 residues: Protein NDL3 (347 aa).

Belongs to the NDRG family. As to quaternary structure, interacts with the heterodimers formed by GB1 and GG1, or GB1 and GG2. Interacts with RGS1.

It is found in the cytoplasm. Its function is as follows. Involved in a signaling pathway that modulates root auxin transport and auxin gradients. Acts partially by positively regulating the auxin carrier PIN2 and AUX1. Acts, together with GB1 as positive regulator of meristem initiation and branching. GB1 and NDL3 positively regulate basipetal inflorescence auxin transport and modulate MAX2 expression in shoots, which regulates organ and lateral meristem formation by the establishment and maintenance of auxin gradients. The polypeptide is Protein NDL3 (Arabidopsis thaliana (Mouse-ear cress)).